The primary structure comprises 159 residues: Transcriptional repressor NrdR (159 aa).

Residues 3 to 34 fold into a zinc finger; that stretch reads CPFCRHEDTQVVDSRVSEDGAAIRRRRRCSAC. In terms of domain architecture, ATP-cone spans 49 to 139; sequence PAVVKKDGSR…VYRRFEDVSE (91 aa).

This sequence belongs to the NrdR family. Requires Zn(2+) as cofactor.

Negatively regulates transcription of bacterial ribonucleotide reductase nrd genes and operons by binding to NrdR-boxes. The sequence is that of Transcriptional repressor NrdR from Burkholderia vietnamiensis (strain G4 / LMG 22486) (Burkholderia cepacia (strain R1808)).